The chain runs to 385 residues: tRNA N6-adenosine threonylcarbamoyltransferase (385 aa).

3 residues coordinate a divalent metal cation: His140, His144, and Tyr161. Substrate is bound by residues Tyr161–Gly165, Asp193, Gly208, Glu212, and Asn314. Asp343 contacts a divalent metal cation.

The protein belongs to the KAE1 / TsaD family. As to quaternary structure, component of the EKC/KEOPS complex composed of at least BUD32, CGI121, GON7, KAE1 and PCC1; the whole complex dimerizes. Requires a divalent metal cation as cofactor.

The protein resides in the cytoplasm. It localises to the nucleus. The catalysed reaction is L-threonylcarbamoyladenylate + adenosine(37) in tRNA = N(6)-L-threonylcarbamoyladenosine(37) in tRNA + AMP + H(+). Component of the EKC/KEOPS complex that is required for the formation of a threonylcarbamoyl group on adenosine at position 37 (t(6)A37) in tRNAs that read codons beginning with adenine. The complex is probably involved in the transfer of the threonylcarbamoyl moiety of threonylcarbamoyl-AMP (TC-AMP) to the N6 group of A37. KAE1 likely plays a direct catalytic role in this reaction, but requires other protein(s) of the complex to fulfill this activity. The EKC/KEOPS complex also promotes both telomere uncapping and telomere elongation. The complex is required for efficient recruitment of transcriptional coactivators. The polypeptide is tRNA N6-adenosine threonylcarbamoyltransferase (Eremothecium gossypii (strain ATCC 10895 / CBS 109.51 / FGSC 9923 / NRRL Y-1056) (Yeast)).